The sequence spans 459 residues: NADH-ubiquinone oxidoreductase chain 4 (459 aa).

13 consecutive transmembrane segments (helical) span residues 22–42, 60–80, 94–112, 113–133, 145–165, 196–216, 224–244, 257–277, 284–303, 308–330, 351–371, 391–411, and 435–455; these read MIWINTTTHSLIISIIPLLFF, PLTTPLLMLTTWLLPLTIMAS, LYLSMLISLQISLIMTFTA, TELIMFYIFFEATLIPTLVII, AGTYFLFYTLVGSLPLLIALI, WLAYTMAFMVKMPLYGLHLWL, PIAGSMMLAAVLLKLGGYGMM, MAYPFLALSLWGMIMTSSISL, SLIAYSSISHMALVVAAILI, SFTGAVVLMIAHGLTSSLLFCLA, LLPLMALWWLLASLANLALPP, TTLLLTGSNMLITALYSLYMF, and ILMFMHLSPILLLSLNPDIIT.

It belongs to the complex I subunit 4 family. In terms of assembly, core subunit of respiratory chain NADH dehydrogenase (Complex I) which is composed of 45 different subunits.

The protein resides in the mitochondrion inner membrane. The catalysed reaction is a ubiquinone + NADH + 5 H(+)(in) = a ubiquinol + NAD(+) + 4 H(+)(out). Core subunit of the mitochondrial membrane respiratory chain NADH dehydrogenase (Complex I) which catalyzes electron transfer from NADH through the respiratory chain, using ubiquinone as an electron acceptor. Essential for the catalytic activity and assembly of complex I. The protein is NADH-ubiquinone oxidoreductase chain 4 (MT-ND4) of Gorilla gorilla gorilla (Western lowland gorilla).